The following is a 280-amino-acid chain: Diaminopimelate epimerase (280 aa).

Residues Asn-13 and Asn-66 each coordinate substrate. The active-site Proton donor is Cys-75. Substrate is bound by residues 76–77 (GN), Asn-165, Asn-198, and 216–217 (ER). The active-site Proton acceptor is Cys-225. Substrate is bound at residue 226 to 227 (GT).

This sequence belongs to the diaminopimelate epimerase family. Homodimer.

The protein resides in the cytoplasm. The enzyme catalyses (2S,6S)-2,6-diaminopimelate = meso-2,6-diaminopimelate. The protein operates within amino-acid biosynthesis; L-lysine biosynthesis via DAP pathway; DL-2,6-diaminopimelate from LL-2,6-diaminopimelate: step 1/1. In terms of biological role, catalyzes the stereoinversion of LL-2,6-diaminopimelate (L,L-DAP) to meso-diaminopimelate (meso-DAP), a precursor of L-lysine and an essential component of the bacterial peptidoglycan. The polypeptide is Diaminopimelate epimerase (Cyanothece sp. (strain PCC 7425 / ATCC 29141)).